A 390-amino-acid chain; its full sequence is MRYLTAGESHGPQLTTIIEGVPAGLYITEEDINFELARRQKGHGRGRRMQIEKDQAKIMSGVRHARTLGSPIALVVENNDWKHWTKIMGAAPITEDEEKEMKRQISRPRPGHADLNGAIKYNHRDMRNVLERSSARETTVRVAAGAVAKKILSELGIKVAGHVLQIGAVKAEKTEYTSIEDLQRVTEESPVRCYDEEAGKKMMAAIDEAKANGDSIGGIVEVIVEGMPVGVGSYVHYDRKLDSKLAAAVLSINAFKGVEFGIGFEAAGRNGSEVHDEIIWDEEKGYTRATNRLGGLEGGMTTGMPIVVRGVMKPIPTLYKPLKSVDIETKEPFSASIERSDSCAVPAASVVAEAAVAWEIANAVVEQFGLDQIDRIRENVENMRKLSREF.

2 residues coordinate NADP(+): R39 and R45. FMN-binding positions include 132 to 134, 253 to 254, G298, 313 to 317, and R339; these read RSS, NA, and KPIPT.

This sequence belongs to the chorismate synthase family. Homotetramer. It depends on FMNH2 as a cofactor.

It catalyses the reaction 5-O-(1-carboxyvinyl)-3-phosphoshikimate = chorismate + phosphate. Its pathway is metabolic intermediate biosynthesis; chorismate biosynthesis; chorismate from D-erythrose 4-phosphate and phosphoenolpyruvate: step 7/7. Its function is as follows. Catalyzes the anti-1,4-elimination of the C-3 phosphate and the C-6 proR hydrogen from 5-enolpyruvylshikimate-3-phosphate (EPSP) to yield chorismate, which is the branch point compound that serves as the starting substrate for the three terminal pathways of aromatic amino acid biosynthesis. This reaction introduces a second double bond into the aromatic ring system. The protein is Chorismate synthase of Bacillus subtilis (strain 168).